The sequence spans 337 residues: DNA-directed RNA polymerase subunit alpha (337 aa).

The interval 1–231 (MRNITISAYT…KQLSVFDKIT (231 aa)) is alpha N-terminal domain (alpha-NTD). Residues 248-337 (NTKLLQNITD…IAELKAQNEG (90 aa)) form an alpha C-terminal domain (alpha-CTD) region.

Belongs to the RNA polymerase alpha chain family. Homodimer. The RNAP catalytic core consists of 2 alpha, 1 beta, 1 beta' and 1 omega subunit. When a sigma factor is associated with the core the holoenzyme is formed, which can initiate transcription.

It carries out the reaction RNA(n) + a ribonucleoside 5'-triphosphate = RNA(n+1) + diphosphate. Its function is as follows. DNA-dependent RNA polymerase catalyzes the transcription of DNA into RNA using the four ribonucleoside triphosphates as substrates. The chain is DNA-directed RNA polymerase subunit alpha from Campylobacter jejuni subsp. doylei (strain ATCC BAA-1458 / RM4099 / 269.97).